Consider the following 726-residue polypeptide: Phenylalanine--tRNA ligase beta subunit (726 aa).

A tRNA-binding domain is found at 38-150 (FSSSKGLLFA…NFASLNDDAS (113 aa)). The 74-residue stretch at 394 to 467 (DKKVEINFDE…RFYNYDNFKE (74 aa)) folds into the B5 domain. Mg(2+) contacts are provided by Asp-445, Asp-451, Glu-454, and Glu-455.

It belongs to the phenylalanyl-tRNA synthetase beta subunit family. Type 1 subfamily. Tetramer of two alpha and two beta subunits. Mg(2+) is required as a cofactor.

The protein localises to the cytoplasm. It carries out the reaction tRNA(Phe) + L-phenylalanine + ATP = L-phenylalanyl-tRNA(Phe) + AMP + diphosphate + H(+). The protein is Phenylalanine--tRNA ligase beta subunit of Mycoplasmopsis synoviae (strain 53) (Mycoplasma synoviae).